The following is a 256-amino-acid chain: Nuclear shuttle protein (256 aa).

The short motif at 21 to 42 (YQGFRRTAIVTRHDGKRRQHQS) is the Bipartite nuclear localization signal element. The Nuclear localization signal signature appears at 81–96 (QLGKIEPNRCRSYIKL). The interaction with Arabidopsis thaliana NSI protein stretch occupies residues 150-187 (ELFGARINSHGNLAVMPSLKDRFYIRHLLKRVLSVDKD).

The protein belongs to the begomovirus nuclear shuttle protein family. Binds to single-stranded and double-stranded viral DNA. Interacts with the host nuclear shuttle interacting (NSI) protein. This interaction may allow NSP to recruit NSI monomers to the viral genome and thus regulate nuclear export of viral genome by NSP.

The protein resides in the host nucleus. It is found in the host cytoplasm. It localises to the host cell membrane. In terms of biological role, binds to the genomic viral ssDNA, shuttles it into and out of the cell nucleus. Begomoviruses use 2 proteins to transport their DNA from cell to cell. The nuclear shuttle protein (NSP) shuttles it between nucleus and cytoplasm and the movement protein (MP) probably transports the DNA-NSP complex to the cell periphery and facilitates movement across the cell wall. This chain is Nuclear shuttle protein, found in Macroptilium lathyroides (Lima bean).